A 398-amino-acid chain; its full sequence is Transcription termination factor 1, mitochondrial (398 aa).

Residues 1-57 constitute a mitochondrion transit peptide; sequence MQSLSLGQTSISKGLNYLTIMAPGNLWHMRNNFLFGSRCWMTRFSAENIFKSVSFRL. Interaction with DNA regions lie at residues 169–170, 246–250, 323–330, 354–357, and 383–390; these read RS, QSTKR, AEKKFNDK, SIST, and SKKRYEAK.

This sequence belongs to the mTERF family. As to quaternary structure, monomer. Post-translationally, phosphoprotein with mostly four phosphate groups. While the DNA-binding activity is unaffected by the phosphorylation state, only the phosphorylated form of the protein is active for termination activity. Functioning seems to be regulated by phosphorylation.

The protein localises to the mitochondrion. Transcription termination factor. Binds to a 28 bp region within the tRNA(Leu(uur)) gene at a position immediately adjacent to and downstream of the 16S rRNA gene; this region comprises a tridecamer sequence critical for directing accurate termination. Binds DNA along the major grove and promotes DNA bending and partial unwinding. Promotes base flipping. Transcription termination activity appears to be polarized with highest specificity for transcripts initiated on the light strand. This Pongo abelii (Sumatran orangutan) protein is Transcription termination factor 1, mitochondrial (MTERF1).